Consider the following 591-residue polypeptide: Serine/threonine-protein phosphatase PP2A 65 kDa regulatory subunit (591 aa).

An N-acetylalanine modification is found at alanine 2. HEAT repeat units lie at residues 10–48, 49–86, 87–125, 126–163, 164–202, 203–241, 242–280, 281–323, 324–362, 363–401, 402–440, 441–479, 480–518, 519–557, and 558–591; these read DSLY…GEER, TRSE…GGPE, FAMY…SAQD, LEIH…VTQP, VKAE…ETEY, LKSD…PQDD, VEHL…GPEI, TRVD…QVQI, ILSS…GAYQ, TVEQ…GIQQ, LSQS…GQEF, FDQK…GAPW, AEQA…GTDI, TTKL…EASV, and IDAQ…IAAA.

It belongs to the phosphatase 2A regulatory subunit A family. In terms of assembly, PP2A exists in several trimeric forms, all of which consist of a core composed of a catalytic subunit associated with a 65 kDa regulatory subunit (PR65) (subunit A). The core complex associates with a third, variable subunit (subunit B), which confers distinct properties to the holoenzyme. Interacts with the inorganic phosphate transporter PXo (CG10483). Component of the Integrator-PP2A (INTAC) complex, composed of the Integrator core complex and protein phosphatase 2A subunits mts/PP2A and Pp2A-29B. As to expression, expression varies in tissues throughout development. Highly distributed expression in early embryos. In late embryonal development, found at high levels in nervous system and gonads. In third instar larvae, found in brain, imaginal disks and salivary glands.

It is found in the nucleus. Its function is as follows. The PR65 subunit of protein phosphatase 2A serves as a scaffolding molecule to coordinate the assembly of the catalytic subunit and a variable regulatory B subunit. Key mediator of a quality checkpoint during transcription elongation as part of the Integrator-PP2A (INTAC) complex. The INTAC complex drives premature transcription termination of transcripts that are unfavorably configured for transcriptional elongation: within the INTAC complex, acts as a scaffolding subunit for mts/PP2A, which catalyzes dephosphorylation of the C-terminal domain (CTD) of Pol II subunit POLR2A/RPB1 and Spt5, thereby preventing transcriptional elongation. The chain is Serine/threonine-protein phosphatase PP2A 65 kDa regulatory subunit (Pp2A-29B) from Drosophila melanogaster (Fruit fly).